An 899-amino-acid polypeptide reads, in one-letter code: Protein argonaute (899 aa).

Residues 107-129 are disordered; sequence TQKPKRRGGRAGGMRGNRGGPST. A compositionally biased stretch (gly residues) spans 116 to 125; that stretch reads RAGGMRGNRG. Residues 229 to 313 enclose the PAZ domain; that stretch reads SMCELLNENR…KQDDYCNSVL (85 aa). Positions 555-878 constitute a Piwi domain; it reads LVVVVIPGPK…LSKFCGEILG (324 aa).

Belongs to the argonaute family. Ago subfamily. Interacts with miR2. Highly specific binding to the mRNA m7G-cap. May be a component of the RNA-induced silencing complex (RISC), a sequence-specific, multicomponent nuclease that destroys or silences messenger RNAs homologous to the silencing trigger.

It is found in the cytoplasm. Its function is as follows. Plays an essential role in growth and, with Dicer, also involved in microRNA (miRNA)-mediated translational repression. The RNA interference pathway is implicated in antigenic variation having a role in regulation of variant-specific surface protein (VSP)-coding gene expression. Several VSP genes are transcribed but only transcripts encoding the VSP to be expressed accumulate. Antisense RNAs corresponding to the silenced VSP genes are detected. This chain is Protein argonaute, found in Giardia intestinalis (strain ATCC 50581 / GS clone H7) (Giardia lamblia).